We begin with the raw amino-acid sequence, 360 residues long: Phospho-N-acetylmuramoyl-pentapeptide-transferase (360 aa).

10 consecutive transmembrane segments (helical) span residues 27–47, 71–91, 93–113, 128–148, 168–188, 199–219, 239–259, 262–282, 288–308, and 337–357; these read GAMI…INSL, TPTM…LLWA, LASV…AIGF, FSGK…AFVI, FVVN…VGAG, GLAI…AYLS, LAVV…FNAP, AIFM…TVAV, IVLA…IIQV, and QVVI…LSTL.

This sequence belongs to the glycosyltransferase 4 family. MraY subfamily. It depends on Mg(2+) as a cofactor.

Its subcellular location is the cell inner membrane. The catalysed reaction is UDP-N-acetyl-alpha-D-muramoyl-L-alanyl-gamma-D-glutamyl-meso-2,6-diaminopimeloyl-D-alanyl-D-alanine + di-trans,octa-cis-undecaprenyl phosphate = di-trans,octa-cis-undecaprenyl diphospho-N-acetyl-alpha-D-muramoyl-L-alanyl-D-glutamyl-meso-2,6-diaminopimeloyl-D-alanyl-D-alanine + UMP. The protein operates within cell wall biogenesis; peptidoglycan biosynthesis. Its function is as follows. Catalyzes the initial step of the lipid cycle reactions in the biosynthesis of the cell wall peptidoglycan: transfers peptidoglycan precursor phospho-MurNAc-pentapeptide from UDP-MurNAc-pentapeptide onto the lipid carrier undecaprenyl phosphate, yielding undecaprenyl-pyrophosphoryl-MurNAc-pentapeptide, known as lipid I. In Brucella anthropi (strain ATCC 49188 / DSM 6882 / CCUG 24695 / JCM 21032 / LMG 3331 / NBRC 15819 / NCTC 12168 / Alc 37) (Ochrobactrum anthropi), this protein is Phospho-N-acetylmuramoyl-pentapeptide-transferase.